A 167-amino-acid chain; its full sequence is Aphrodisin (167 aa).

The N-terminal stretch at 1 to 16 is a signal peptide; sequence MVKILLLALVFSLAHA. Glutamine 17 is modified (pyrrolidone carboxylic acid). 2 cysteine pairs are disulfide-bonded: cysteine 54–cysteine 58 and cysteine 73–cysteine 165. 2 N-linked (GlcNAc...) asparagine glycosylation sites follow: asparagine 57 and asparagine 85.

Belongs to the calycin superfamily. Lipocalin family. As to expression, expressed in the vagina, uterus, and Bartholin's glands of female hamsters. Secreted in vaginal discharge.

The protein resides in the secreted. In terms of biological role, acts as an aphrodisiac pheromone, reliably eliciting copulatory behavior from male hamster. The polypeptide is Aphrodisin (Cricetus cricetus (Black-bellied hamster)).